The chain runs to 348 residues: Malyl-CoA/beta-methylmalyl-CoA/citramalyl-CoA lyase (348 aa).

Substrate is bound by residues 32–33 (HF), Lys40, and Arg92. The Mg(2+) site is built by Glu157 and Asp184. Substrate contacts are provided by residues 183–184 (AD) and Leu274.

The protein belongs to the HpcH/HpaI aldolase family. In terms of assembly, homohexamer. Dimer of trimers. Mg(2+) serves as cofactor. Mn(2+) is required as a cofactor.

The catalysed reaction is (S)-malyl-CoA = glyoxylate + acetyl-CoA. The enzyme catalyses (2R,3S)-beta-methylmalyl-CoA = propanoyl-CoA + glyoxylate. It carries out the reaction (3S)-citramalyl-CoA = pyruvate + acetyl-CoA. Its activity is regulated as follows. Inhibited by oxalate. Its function is as follows. Involved in the 3-hydroxypropionate cycle used for autotrophic carbon dioxide fixation, and in the glyoxylate assimilation cycle used to regenerate acetyl-CoA and produce pyruvate as universal precursor for biosynthesis. As a part of the 3-hydroxypropionate cycle, it catalyzes the cleavage of (S)-malyl-CoA to yield acetyl-CoA and glyoxylate. As part of the glyoxylate assimilation cycle, it catalyzes the condensation of glyoxylate with propionyl-CoA to yield (2R,3S)-beta-methylmalyl-CoA, and catalyzes the cleavage of (S)-citramalyl-CoA to yield acetyl-CoA and pyruvate. The chain is Malyl-CoA/beta-methylmalyl-CoA/citramalyl-CoA lyase (mcl) from Chloroflexus aurantiacus.